A 66-amino-acid chain; its full sequence is Muscarinic toxin 1 (66 aa).

Disulfide bonds link Cys3/Cys24, Cys17/Cys42, Cys46/Cys58, and Cys59/Cys64.

Belongs to the three-finger toxin family. Short-chain subfamily. Aminergic toxin sub-subfamily. In terms of tissue distribution, expressed by the venom gland.

The protein localises to the secreted. Shows a non-competitive interaction with adrenergic and muscarinic receptors. Binds to alpha-2b (ADRA2B) (IC(50)=2.3 nM), alpha-1a (ADRA1A), alpha-1b (ADRA1B), and alpha-2c (ADRA2C) adrenergic receptors. Reversibly binds to M1 (CHRM1) muscarinic acetylcholine receptors, probably by interacting with the orthosteric site. Also reveals a slightly weaker effect at M3 (CHRM3) and M4 (CHRM4) receptors. The order of potency is ADRA2B&gt;&gt;CHRM1&gt;ADRA1A&gt;ADRA1B&gt;ADRA2C/CHRM4. The polypeptide is Muscarinic toxin 1 (Dendroaspis angusticeps (Eastern green mamba)).